Reading from the N-terminus, the 130-residue chain is MANLPSDFSYSEDHEWINATADSVVGSTVRIGITSVATDRLGEVVFAELPAVGDTVEHGETCGEVESTKSVSDLYSPVTGTVTAVNEGVHDDYAVINNDPFGEGWLFEVEVTEAGELMTADEYASANGVD.

The Lipoyl-binding domain maps to 28 to 110 (TVRIGITSVA…FGEGWLFEVE (83 aa)). Lys-69 carries the post-translational modification N6-lipoyllysine.

It belongs to the GcvH family. The glycine cleavage system is composed of four proteins: P, T, L and H. Requires (R)-lipoate as cofactor.

In terms of biological role, the glycine cleavage system catalyzes the degradation of glycine. The H protein shuttles the methylamine group of glycine from the P protein to the T protein. In Corynebacterium aurimucosum (strain ATCC 700975 / DSM 44827 / CIP 107346 / CN-1) (Corynebacterium nigricans), this protein is Glycine cleavage system H protein.